The primary structure comprises 513 residues: MFETEHHTLLPLLLLPSLLSLLLFLILLKRRNRKTRFNLPPGKSGWPFLGETIGYLKPYTATTLGDFMQQHVSKYGKIYRSNLFGEPTIVSADAGLNRFILQNEGRLFECSYPRSIGGILGKWSMLVLVGDMHRDMRSISLNFLSHARLRTILLKDVERHTLFVLDSWQQNSIFSAQDEAKKFTFNLMAKHIMSMDPGEEETEQLKKEYVTFMKGVVSAPLNLPGTAYHKALQSRATILKFIERKMEERKLDIKEEDQEEEEVKTEDEAEMSKSDHVRKQRTDDDLLGWVLKHSNLSTEQILDLILSLLFAGHETSSVAIALAIFFLQACPKAVEELREEHLEIARAKKELGESELNWDDYKKMDFTQCVINETLRLGNVVRFLHRKALKDVRYKGYDIPSGWKVLPVISAVHLDNSRYDQPNLFNPWRWQQQNNGASSSGSGSFSTWGNNYMPFGGGPRLCAGSELAKLEMAVFIHHLVLKFNWELAEDDKPFAFPFVDFPNGLPIRVSRIL.

A helical membrane pass occupies residues 8–28 (TLLPLLLLPSLLSLLLFLILL). The disordered stretch occupies residues 252–277 (DIKEEDQEEEEVKTEDEAEMSKSDHV). The segment covering 254–269 (KEEDQEEEEVKTEDEA) has biased composition (acidic residues). Residue Cys-462 coordinates heme.

It belongs to the cytochrome P450 family. Heme is required as a cofactor. In terms of tissue distribution, expressed in stems, leaves, shoots, and roots, with a higher expression in siliques and apical shoots.

Its subcellular location is the membrane. The enzyme catalyses a C27-steroid + reduced [NADPH--hemoprotein reductase] + O2 = a (22S)-22-hydroxy C27-steroid + oxidized [NADPH--hemoprotein reductase] + H2O + H(+). The catalysed reaction is a C28-steroid + reduced [NADPH--hemoprotein reductase] + O2 = a (22S)-22-hydroxy C28-steroid + oxidized [NADPH--hemoprotein reductase] + H2O + H(+). It catalyses the reaction a C29-steroid + reduced [NADPH--hemoprotein reductase] + O2 = a (22S)-22-hydroxy C29-steroid + oxidized [NADPH--hemoprotein reductase] + H2O + H(+). It carries out the reaction cholesterol + reduced [NADPH--hemoprotein reductase] + O2 = (22S)-22-hydroxycholesterol + oxidized [NADPH--hemoprotein reductase] + H2O + H(+). The enzyme catalyses cholestanol + reduced [NADPH--hemoprotein reductase] + O2 = (22S)-22-hydroxycholestanol + oxidized [NADPH--hemoprotein reductase] + H2O + H(+). The catalysed reaction is campestanol + reduced [NADPH--hemoprotein reductase] + O2 = 6-deoxycathasterone + oxidized [NADPH--hemoprotein reductase] + H2O + H(+). It catalyses the reaction campesterol + reduced [NADPH--hemoprotein reductase] + O2 = (22S)-22-hydroxycampesterol + oxidized [NADPH--hemoprotein reductase] + H2O + H(+). It carries out the reaction 6-oxocampestanol + reduced [NADPH--hemoprotein reductase] + O2 = cathasterone + oxidized [NADPH--hemoprotein reductase] + H2O + H(+). The enzyme catalyses sitosterol + reduced [NADPH--hemoprotein reductase] + O2 = (22S)-22-hydroxysitosterol + oxidized [NADPH--hemoprotein reductase] + H2O + H(+). The protein operates within plant hormone biosynthesis; brassinosteroid biosynthesis. Its function is as follows. Catalyzes the C22-alpha-hydroxylation step in brassinosteroids biosynthesis. Converts campesterol (CR) to (22S)-22-hydroxycampesterol (22-OHCR, 22-hydroxyCR), campestanol (CN) to 6-deoxycathasterone (6-deoxoCT), and 6-oxocampestanol (6-oxoCN) to cathasterone (CT). Can also use cholesterol and cholestanol as substrates. This Arabidopsis thaliana (Mouse-ear cress) protein is Steroid (22S)-hydroxylase.